A 28-amino-acid polypeptide reads, in one-letter code: Putative antitoxin AF_1079 (28 aa).

It belongs to the UPF0165 family.

In terms of biological role, possibly the antitoxin component of a type II toxin-antitoxin (TA) system. This Archaeoglobus fulgidus (strain ATCC 49558 / DSM 4304 / JCM 9628 / NBRC 100126 / VC-16) protein is Putative antitoxin AF_1079.